A 534-amino-acid polypeptide reads, in one-letter code: Bifunctional pantoate ligase/cytidylate kinase (534 aa).

The tract at residues 1–302 (MRLLTTVAAL…LGSTRLIDNT (302 aa)) is pantoate--beta-alanine ligase. 48–55 (MGSLHQGH) serves as a coordination point for ATP. Residue histidine 55 is the Proton donor of the active site. Glutamine 79 lines the (R)-pantoate pocket. Glutamine 79 is a beta-alanine binding site. Residue 172–175 (GQKD) coordinates ATP. Residue glutamine 178 coordinates (R)-pantoate. ATP-binding positions include valine 201 and 209–212 (CSSR). The cytidylate kinase stretch occupies residues 303–534 (ILRDRQPIIA…DYYQQRLSQW (232 aa)).

The protein in the N-terminal section; belongs to the pantothenate synthetase family. In the C-terminal section; belongs to the cytidylate kinase family. Type 1 subfamily.

Its subcellular location is the cytoplasm. The enzyme catalyses (R)-pantoate + beta-alanine + ATP = (R)-pantothenate + AMP + diphosphate + H(+). It carries out the reaction CMP + ATP = CDP + ADP. It catalyses the reaction dCMP + ATP = dCDP + ADP. Its pathway is cofactor biosynthesis; (R)-pantothenate biosynthesis; (R)-pantothenate from (R)-pantoate and beta-alanine: step 1/1. Functionally, catalyzes the condensation of pantoate with beta-alanine in an ATP-dependent reaction via a pantoyl-adenylate intermediate. Its function is as follows. Catalyzes the transfer of a phosphate group from ATP to either CMP or dCMP to form CDP or dCDP and ADP, respectively. This is Bifunctional pantoate ligase/cytidylate kinase from Trichormus variabilis (strain ATCC 29413 / PCC 7937) (Anabaena variabilis).